Consider the following 721-residue polypeptide: Protein quick-to-court (721 aa).

Disordered regions lie at residues 1–42, 143–210, 360–379, 393–428, and 441–471; these read MMTS…RIPH, VGNS…ASVA, SSPEERSASSDAVTVREAEL, DEGNAKGSPRHLSRQQQQQANHSLQAMQMSAEMQSS, and SSVHSKDSQTQSEACGTATPDGEADVGCGAG. A compositionally biased stretch (basic and acidic residues) spans 17-31; the sequence is QVQREKDNDSAEDSH. The segment covering 161–201 has biased composition (low complexity); that stretch reads NGGSDISSSGTSSSSSNNKESSPRTTRTPRTPQTPQTPQTP. The segment covering 362–379 has biased composition (basic and acidic residues); sequence PEERSASSDAVTVREAEL. Positions 406-420 are enriched in low complexity; sequence RQQQQQANHSLQAMQ. Positions 441–454 are enriched in polar residues; sequence SSVHSKDSQTQSEA. Residues 511-569 adopt a coiled-coil conformation; the sequence is KRSHNDKVEALLQKLAECNTRYSDMVPDYEQAKQRIRELEKQLEDLQRKLIEHEEKQNK. The GRIP domain maps to 668-716; the sequence is HVDPEVTLQFLKSAIFYFLTDKENSQGHLQAIESILEFTDAEKQKISAA.

As to expression, expressed in the third antennal segment and the maxillary palp, with increased expression near the cuticle of both olfactory organs. Also detected in the second antenna segment. In the brain, expressed in the central nervous system, with high levels of expression in the visual system including the retina and optic lobe, and uniform expression in the cortex. Detected in the thorax and abdomen, with increased expression in the ventral ganglion. In males, detected in the reproductive tract including the ejaculatory bulb and testis.

Functionally, in adult males, modulates sexual behavior by playing a role in sex discrimination and maintaining normal levels of sexual activity towards both males and females. The protein is Protein quick-to-court of Drosophila melanogaster (Fruit fly).